Consider the following 405-residue polypeptide: Aspartokinase (405 aa).

ACT domains lie at 267 to 344 and 345 to 405; these read VSME…AKVS and IVGV…QLDQ.

This sequence belongs to the aspartokinase family.

It catalyses the reaction L-aspartate + ATP = 4-phospho-L-aspartate + ADP. Its pathway is amino-acid biosynthesis; L-lysine biosynthesis via DAP pathway; (S)-tetrahydrodipicolinate from L-aspartate: step 1/4. It participates in amino-acid biosynthesis; L-methionine biosynthesis via de novo pathway; L-homoserine from L-aspartate: step 1/3. It functions in the pathway amino-acid biosynthesis; L-threonine biosynthesis; L-threonine from L-aspartate: step 1/5. The protein is Aspartokinase (lysC) of Helicobacter pylori (strain ATCC 700392 / 26695) (Campylobacter pylori).